We begin with the raw amino-acid sequence, 327 residues long: DNA polymerase III subunit delta' (327 aa).

DNA polymerase III contains a core (composed of alpha, epsilon and theta chains) that associates with a tau subunit. This core dimerizes to form the POLIII' complex. PolIII' associates with the gamma complex (composed of gamma, delta, delta', psi and chi chains) and with the beta chain to form the complete DNA polymerase III complex.

The enzyme catalyses DNA(n) + a 2'-deoxyribonucleoside 5'-triphosphate = DNA(n+1) + diphosphate. Functionally, DNA polymerase III is a complex, multichain enzyme responsible for most of the replicative synthesis in bacteria. This DNA polymerase also exhibits 3' to 5' exonuclease activity. This is DNA polymerase III subunit delta' (holB) from Haemophilus influenzae (strain ATCC 51907 / DSM 11121 / KW20 / Rd).